We begin with the raw amino-acid sequence, 268 residues long: Minor capsid protein VP2 (268 aa).

The span at 132 to 144 (STPQSLGALTGRT) shows a compositional bias: polar residues. The disordered stretch occupies residues 132-199 (STPQSLGALT…SLSSAARTRS (68 aa)). Over residues 145–163 (NSRVSAPARSSPSALSNAP) the composition is skewed to low complexity. Residues 164–178 (TATSLHSNQTVSTRL) are compositionally biased toward polar residues. The span at 179–195 (GSSAGSGTGVSSLSSAA) shows a compositional bias: low complexity.

Belongs to the norovirus VP2 family. As to quaternary structure, homooligomer. The portal-like structure consists in 12 copies of VP2. Interacts with capsid protein VP1.

The protein localises to the virion. The protein resides in the host cytoplasm. Its function is as follows. Minor structural protein that forms a portal-like structure at a unique three-fold axis of symmetry, following binding to the host receptor. The channel formed by VP2 may allow the delivery of the viral genome through the host endosomal membrane. In Lordsdale virus (strain GII/Human/United Kingdom/Lordsdale/1993) (Human enteric calicivirus), this protein is Minor capsid protein VP2.